A 956-amino-acid chain; its full sequence is Glutamyl aminopeptidase (956 aa).

Topologically, residues 1-21 (MILEERSSWEGSKRYCIKTKH) are cytoplasmic. A helical; Signal-anchor for type II membrane protein transmembrane segment spans residues 22 to 42 (VAIICAVVVAVGLIVGLSVGL). Topologically, residues 43–956 (TRSCDSTEGM…IRNWFLDLNG (914 aa)) are extracellular. Residues 48–87 (STEGMTQGTTQGTTQAPSHLPPVTSPPEDQGVCPASEDES) form a disordered region. Positions 49–62 (TEGMTQGTTQGTTQ) are enriched in low complexity. N-linked (GlcNAc...) asparagine glycans are attached at residues N126 and N199. Residue E225 coordinates substrate. N-linked (GlcNAc...) asparagine glycosylation is present at N326. 359-363 (GAMEN) contributes to the substrate binding site. Zn(2+) is bound at residue H395. E396 serves as the catalytic Proton acceptor. Positions 399 and 418 each coordinate Zn(2+). N556, N569, N599, N643, N647, N679, N764, N797, N802, and N829 each carry an N-linked (GlcNAc...) asparagine glycan. Residue R888 participates in substrate binding.

This sequence belongs to the peptidase M1 family. In terms of assembly, homodimer; disulfide-linked. Requires Zn(2+) as cofactor.

It localises to the cell membrane. The catalysed reaction is Release of N-terminal glutamate (and to a lesser extent aspartate) from a peptide.. Its activity is regulated as follows. Substrate specificity is modulated by calcium which enhances the enzymatic activity for cleavage of acidic residues while reducing its activity with basic residues. Inhibited by aminopeptidase inhibitors amastatin and bestatin. Regulates central hypertension through its calcium-modulated preference to cleave N-terminal acidic residues from peptides such as angiotensin II. The sequence is that of Glutamyl aminopeptidase (ENPEP) from Bos taurus (Bovine).